A 333-amino-acid polypeptide reads, in one-letter code: Mitochondrial thiamine pyrophosphate carrier 1 (333 aa).

3 Solcar repeats span residues 12–115 (GSRL…ITQF), 129–215 (PPSV…LRPR), and 222–318 (PYSS…ALKL). Helical transmembrane passes span 17–35 (VTAA…IAPL), 96–112 (LLYV…YRSI), 135–155 (FIAG…LDLL), 190–209 (GLGP…FCVY), 221–238 (LPYS…SVMA), and 293–310 (GLTV…VTMW).

This sequence belongs to the mitochondrial carrier (TC 2.A.29) family.

Its subcellular location is the mitochondrion inner membrane. Its function is as follows. Mitochondrial transporter that mediates uptake of thiamine pyrophosphate (ThPP) into mitochondria. This Neurospora crassa (strain ATCC 24698 / 74-OR23-1A / CBS 708.71 / DSM 1257 / FGSC 987) protein is Mitochondrial thiamine pyrophosphate carrier 1 (tpc-1).